The chain runs to 254 residues: Uracil-DNA glycosylase (254 aa).

D78 acts as the Proton acceptor in catalysis.

It belongs to the uracil-DNA glycosylase (UDG) superfamily. UNG family.

It localises to the cytoplasm. The enzyme catalyses Hydrolyzes single-stranded DNA or mismatched double-stranded DNA and polynucleotides, releasing free uracil.. Functionally, excises uracil residues from the DNA which can arise as a result of misincorporation of dUMP residues by DNA polymerase or due to deamination of cytosine. This is Uracil-DNA glycosylase from Bordetella petrii (strain ATCC BAA-461 / DSM 12804 / CCUG 43448).